The sequence spans 771 residues: Tetratricopeptide repeat-containing protein trd-1 (771 aa).

TPR repeat units follow at residues 389–415, 416–449, 451–484, 485–518, 520–552, and 553–586; these read LEMWDGVIDCYKQLGQMDKAETLIRRL, IEQKPNDSMLHVYLGDITRNLEYFTKAIELSDDR, ARAHRSLGHLLLMDKKFEEAYKHLRRSLELQPIQ, LGTWFNAGYCAWKLENFKESTQCYHRCVSLQPDH, EAWNNLSAAYIRHGQKPKAWKLLQEALKYNYEH, and PNVWENYMLLSVDVGEFSQAIQAYHRLLDMNKRG.

It belongs to the TTC27 family. In terms of tissue distribution, expressed in the spermatheca.

The protein localises to the cytoplasm. In terms of biological role, developmental protein required for cell fate determination in both the germline and seam cells of the developing epidermis. Specifically, involved in sex determination and may function in parallel or downstream of other sex determination factors, including tra-2 and fem-3, to promote oogenesis in its role in the regulation of the switch from spermatogenesis to oogenesis in the gonads. Also implicated in the mitosis to meiosis switch in distal tip cells. In Caenorhabditis elegans, this protein is Tetratricopeptide repeat-containing protein trd-1.